The chain runs to 529 residues: BTB/POZ domain-containing protein 6 (529 aa).

Residues 127 to 197 form the BTB domain; sequence ADVHFIVGPA…LYSDEIDLEA (71 aa).

In terms of assembly, homodimer and heterodimer. Interacts with cul3 via the BTB domain.

Its subcellular location is the cytoplasm. Its function is as follows. Adapter protein for the cul3 E3 ubiquitin-protein ligase complex. Involved in late neuronal development and muscle formation. This Xenopus laevis (African clawed frog) protein is BTB/POZ domain-containing protein 6 (btbd6).